A 357-amino-acid chain; its full sequence is Homoserine O-acetyltransferase (357 aa).

The region spanning 51–340 (NVIVICHALT…EPYGHDAFLI (290 aa)) is the AB hydrolase-1 domain. The active-site Nucleophile is the Ser147. Arg216 contacts substrate. Residues Asp306 and His335 contribute to the active site. Asp336 contributes to the substrate binding site.

Belongs to the AB hydrolase superfamily. MetX family. Homodimer.

Its subcellular location is the cytoplasm. It carries out the reaction L-homoserine + acetyl-CoA = O-acetyl-L-homoserine + CoA. It functions in the pathway amino-acid biosynthesis; L-methionine biosynthesis via de novo pathway; O-acetyl-L-homoserine from L-homoserine: step 1/1. In terms of biological role, transfers an acetyl group from acetyl-CoA to L-homoserine, forming acetyl-L-homoserine. This is Homoserine O-acetyltransferase from Chlorobium chlorochromatii (strain CaD3).